Consider the following 160-residue polypeptide: uncharacterized protein (160 aa).

Residues 1-31 (METEKPNTDVKVAQDLEKLKLDEKHKDEKKD) are compositionally biased toward basic and acidic residues. The segment at 1-160 (METEKPNTDV…DKKDKEHKKE (160 aa)) is disordered. Positions 20-111 (KLDEKHKDEK…KSKLEGKKDK (92 aa)) form a coiled coil. Residues 32 to 42 (KKDKKDKKDKK) show a composition bias toward basic residues. Basic and acidic residues predominate over residues 43 to 160 (DKKEKTPEEI…DKKDKEHKKE (118 aa)).

This is an uncharacterized protein from Dictyostelium discoideum (Social amoeba).